Consider the following 592-residue polypeptide: A-type ATP synthase subunit A (592 aa).

234-241 (GGFGTGKT) contributes to the ATP binding site.

It belongs to the ATPase alpha/beta chains family. As to quaternary structure, has multiple subunits with at least A(3), B(3), C, D, E, F, H, I and proteolipid K(x).

The protein localises to the cell membrane. It carries out the reaction ATP + H2O + 4 H(+)(in) = ADP + phosphate + 5 H(+)(out). In terms of biological role, component of the A-type ATP synthase that produces ATP from ADP in the presence of a proton gradient across the membrane. The A chain is the catalytic subunit. This Cenarchaeum symbiosum (strain A) protein is A-type ATP synthase subunit A.